A 266-amino-acid chain; its full sequence is Imidazole glycerol phosphate synthase subunit HisF (266 aa).

Active-site residues include D11 and D130.

Belongs to the HisA/HisF family. In terms of assembly, heterodimer of HisH and HisF.

The protein localises to the cytoplasm. The catalysed reaction is 5-[(5-phospho-1-deoxy-D-ribulos-1-ylimino)methylamino]-1-(5-phospho-beta-D-ribosyl)imidazole-4-carboxamide + L-glutamine = D-erythro-1-(imidazol-4-yl)glycerol 3-phosphate + 5-amino-1-(5-phospho-beta-D-ribosyl)imidazole-4-carboxamide + L-glutamate + H(+). Its pathway is amino-acid biosynthesis; L-histidine biosynthesis; L-histidine from 5-phospho-alpha-D-ribose 1-diphosphate: step 5/9. Functionally, IGPS catalyzes the conversion of PRFAR and glutamine to IGP, AICAR and glutamate. The HisF subunit catalyzes the cyclization activity that produces IGP and AICAR from PRFAR using the ammonia provided by the HisH subunit. In Delftia acidovorans (strain DSM 14801 / SPH-1), this protein is Imidazole glycerol phosphate synthase subunit HisF.